The following is a 20-amino-acid chain: Ferric reductase A (20 aa).

Monomer.

The catalysed reaction is 2 a Fe(II)-siderophore + NAD(+) + H(+) = 2 a Fe(III)-siderophore + NADH. Functionally, reductase activity that acts on Fe(3+)-chelates and NADH as an electron donor and requires the presence of FMN for full activity. May play a role in iron uptake. This Paracoccus denitrificans protein is Ferric reductase A (ferA).